A 665-amino-acid chain; its full sequence is Probable potassium transport system protein Kup (665 aa).

12 consecutive transmembrane segments (helical) span residues 15–35, 48–68, 100–120, 147–167, 173–193, 219–239, 251–271, 292–312, 348–368, 378–398, 403–423, and 431–451; these read SFLI…LYVM, ITPD…TLLT, WLII…MLTP, IIII…HFGT, IFGP…IVNL, LGFF…ALYS, LTWP…AAWI, MMPS…AIIA, IYMP…VLYF, YGLS…NYLL, PLPI…SFLI, and KGGF…YIWI.

This sequence belongs to the HAK/KUP transporter (TC 2.A.72) family.

It is found in the cell membrane. It carries out the reaction K(+)(in) + H(+)(in) = K(+)(out) + H(+)(out). In terms of biological role, transport of potassium into the cell. Likely operates as a K(+):H(+) symporter. The chain is Probable potassium transport system protein Kup from Clostridium perfringens (strain ATCC 13124 / DSM 756 / JCM 1290 / NCIMB 6125 / NCTC 8237 / Type A).